Consider the following 268-residue polypeptide: MSGKHYKGPEVSCCIKYFIFGFNVIFWFLGIAFLGIGLWAWNEKGVLSNISSITDLGGFDPVWLFLVVGGVMFILGFAGCIGALRENTFLLKFFSVFLGIIFFLELTAGVLAFVFKDWIKDQLYFFINNNIRAYRDDIDLQNLIDFTQEYWQCCGAFGADDWNLNIYFNCTDSNASRERCGVPFSCCTKDPAEDVINTQCGYDARQKPEVDQQIVIYTKGCVPQFEKWLQDNLTIVAGIFIGIALLQIFGICLAQNLVSDIEAVRASW.

The Cytoplasmic segment spans residues 1–17; sequence MSGKHYKGPEVSCCIKY. Residues 18–38 traverse the membrane as a helical segment; it reads FIFGFNVIFWFLGIAFLGIGL. Topologically, residues 39 to 61 are extracellular; that stretch reads WAWNEKGVLSNISSITDLGGFDP. A glycan (N-linked (GlcNAc...) asparagine) is linked at N49. Residues 62–82 traverse the membrane as a helical segment; the sequence is VWLFLVVGGVMFILGFAGCIG. Residues 83–92 are Cytoplasmic-facing; it reads ALRENTFLLK. The helical transmembrane segment at 93–113 threads the bilayer; sequence FFSVFLGIIFFLELTAGVLAF. Residues 114 to 232 lie on the Extracellular side of the membrane; it reads VFKDWIKDQL…PQFEKWLQDN (119 aa). Disulfide bonds link C153–C221, C154–C186, C170–C180, and C187–C200. N169 and N174 each carry an N-linked (GlcNAc...) asparagine glycan. N-linked (GlcNAc...) asparagine glycosylation occurs at N232. A helical transmembrane segment spans residues 233–253; the sequence is LTIVAGIFIGIALLQIFGICL. The Cytoplasmic portion of the chain corresponds to 254–268; it reads AQNLVSDIEAVRASW.

It belongs to the tetraspanin (TM4SF) family. Interacts with ADAM10; the interaction influences ADAM10 substrate specificity, endocytosis and turnover. Post-translationally, palmitoylated.

The protein resides in the cell membrane. Its function is as follows. Part of TspanC8 subgroup, composed of 6 members that interact with the transmembrane metalloprotease ADAM10. This interaction is required for ADAM10 exit from the endoplasmic reticulum and for enzymatic maturation and trafficking to the cell surface as well as substrate specificity. Different TspanC8/ADAM10 complexes have distinct substrates. Promotes ADAM10-mediated cleavage of CD44. Seems to regulate VE-cadherin expression in endothelial cells probably through interaction with ADAM10, promoting leukocyte transmigration. The protein is Tetraspanin-5 (TSPAN5) of Bos taurus (Bovine).